Consider the following 1145-residue polypeptide: Cation channel sperm-associated auxiliary subunit gamma 2 (1145 aa).

Positions 1–38 (MVSRPAMSPVSPVWPRKPNLWAFWVLRLVLLLSLKSWA) are cleaved as a signal peptide. Topologically, residues 39–1061 (EDALQHCTWL…IHGLPLSSKR (1023 aa)) are extracellular. 2 cysteine pairs are disulfide-bonded: cysteine 45–cysteine 106 and cysteine 160–cysteine 166. The N-linked (GlcNAc...) asparagine glycan is linked to asparagine 103. Asparagine 178 carries N-linked (GlcNAc...) asparagine glycosylation. A disulfide bridge connects residues cysteine 289 and cysteine 344. N-linked (GlcNAc...) asparagine glycosylation is found at asparagine 356, asparagine 402, asparagine 672, and asparagine 743. Cystine bridges form between cysteine 395-cysteine 403, cysteine 634-cysteine 856, cysteine 802-cysteine 830, cysteine 878-cysteine 1042, cysteine 905-cysteine 914, and cysteine 1006-cysteine 1012. Asparagine 1038 is a glycosylation site (N-linked (GlcNAc...) asparagine). A helical membrane pass occupies residues 1062–1083 (TSFIVMVSTSFFIALVVFYILF). Residues 1084–1145 (CLVWPHIVKA…KEDNVQAKTA (62 aa)) lie on the Cytoplasmic side of the membrane.

It belongs to the CATSPERG family. Component of the CatSper complex or CatSpermasome composed of the core pore-forming members CATSPER1, CATSPER2, CATSPER3 and CATSPER4 as well as auxiliary members CATSPERB, CATSPERG2, CATSPERD, CATSPERE, CATSPERZ, C2CD6/CATSPERT, SLCO6C1, TMEM249, TMEM262 and EFCAB9. HSPA1 may be an additional auxiliary complex member. The core complex members CATSPER1, CATSPER2, CATSPER3 and CATSPER4 form a heterotetrameric channel. The auxiliary CATSPERB, CATSPERG2, CATSPERD and CATSPERE subunits form a pavilion-like structure over the pore which stabilizes the complex through interactions with CATSPER4, CATSPER3, CATSPER1 and CATSPER2 respectively. SLCO6C1 interacts with CATSPERE and TMEM262/CATSPERH interacts with CATSPERB, further stabilizing the complex. C2CD6/CATSPERT interacts at least with CATSPERD and is required for targeting the CatSper complex in the flagellar membrane. Testis-specific. Specifically expressed in the principal piece of the sperm tail (at protein level). Expressed in spermatocytes and spermatids within the seminiferous tubule but not in interstitial cells.

Its subcellular location is the cell projection. The protein resides in the cilium. It is found in the flagellum membrane. In terms of biological role, auxiliary component of the CatSper complex, a complex involved in sperm cell hyperactivation. Sperm cell hyperactivation is needed for sperm motility which is essential late in the preparation of sperm for fertilization. The protein is Cation channel sperm-associated auxiliary subunit gamma 2 of Mus musculus (Mouse).